The sequence spans 437 residues: Cobyrinate a,c-diamide synthase (437 aa).

The GATase cobBQ-type domain occupies 241-430 (KIAVAKDEAF…AHVHFFGNLD (190 aa)). The active-site Nucleophile is Cys323.

This sequence belongs to the CobB/CbiA family. The cofactor is Mg(2+).

It carries out the reaction cob(II)yrinate + 2 L-glutamine + 2 ATP + 2 H2O = cob(II)yrinate a,c diamide + 2 L-glutamate + 2 ADP + 2 phosphate + 2 H(+). It participates in cofactor biosynthesis; adenosylcobalamin biosynthesis; cob(II)yrinate a,c-diamide from sirohydrochlorin (anaerobic route): step 10/10. Functionally, catalyzes the ATP-dependent amidation of the two carboxylate groups at positions a and c of cobyrinate, using either L-glutamine or ammonia as the nitrogen source. In Clostridium acetobutylicum (strain ATCC 824 / DSM 792 / JCM 1419 / IAM 19013 / LMG 5710 / NBRC 13948 / NRRL B-527 / VKM B-1787 / 2291 / W), this protein is Cobyrinate a,c-diamide synthase.